The sequence spans 612 residues: Dihydroxy-acid dehydratase (612 aa).

D81 provides a ligand contact to Mg(2+). [2Fe-2S] cluster is bound at residue C122. Mg(2+)-binding residues include D123 and K124. Residue K124 is modified to N6-carboxylysine. [2Fe-2S] cluster is bound at residue C195. Residue E491 participates in Mg(2+) binding. Catalysis depends on S517, which acts as the Proton acceptor.

The protein belongs to the IlvD/Edd family. In terms of assembly, homodimer. Requires [2Fe-2S] cluster as cofactor. Mg(2+) is required as a cofactor.

It carries out the reaction (2R)-2,3-dihydroxy-3-methylbutanoate = 3-methyl-2-oxobutanoate + H2O. The enzyme catalyses (2R,3R)-2,3-dihydroxy-3-methylpentanoate = (S)-3-methyl-2-oxopentanoate + H2O. It functions in the pathway amino-acid biosynthesis; L-isoleucine biosynthesis; L-isoleucine from 2-oxobutanoate: step 3/4. The protein operates within amino-acid biosynthesis; L-valine biosynthesis; L-valine from pyruvate: step 3/4. In terms of biological role, functions in the biosynthesis of branched-chain amino acids. Catalyzes the dehydration of (2R,3R)-2,3-dihydroxy-3-methylpentanoate (2,3-dihydroxy-3-methylvalerate) into 2-oxo-3-methylpentanoate (2-oxo-3-methylvalerate) and of (2R)-2,3-dihydroxy-3-methylbutanoate (2,3-dihydroxyisovalerate) into 2-oxo-3-methylbutanoate (2-oxoisovalerate), the penultimate precursor to L-isoleucine and L-valine, respectively. This Haemophilus influenzae (strain PittEE) protein is Dihydroxy-acid dehydratase.